The sequence spans 238 residues: Neuromodulin (238 aa).

The segment at 1–238 (MLCCMRRTKQ…EEPEADQEHA (238 aa)) is disordered. S-palmitoyl cysteine attachment occurs at residues C3 and C4. Basic and acidic residues predominate over residues 9 to 32 (KQVEKNDEDQKIEQDGIKPEDKAH). Residues 31–60 (AHKAATKIQASFRGHITRKKLKGEKKDDAQ) enclose the IQ domain. A Phosphoserine; by PHK and PKC modification is found at S41. Residues 54-83 (EKKDDAQAAEAEANKKDEAPVADGVEKKGE) show a composition bias toward basic and acidic residues. Positions 84–95 (GTTATEAAPATG) are enriched in low complexity. The segment covering 97–116 (KPDEPGKAGETPSEEKKGEG) has biased composition (basic and acidic residues). The segment covering 119-130 (ATEQAAPQAPAS) has biased composition (low complexity). Residues 139–154 (ETESATKASTDNSPSS) are compositionally biased toward polar residues. 3 positions are modified to phosphoserine: S151, S153, and S154. The span at 155-167 (KAEDAPAKEEPKQ) shows a compositional bias: basic and acidic residues. Over residues 168–199 (ADVPAAVTAAAATTPAAEDAAAKATAQPPTET) the composition is skewed to low complexity. T181 bears the Phosphothreonine mark. Phosphoserine; by CK2 is present on residues S202 and S203. Positions 213–225 (DETKPKESARQDE) are enriched in basic and acidic residues. Acidic residues predominate over residues 226-238 (GKEEEPEADQEHA).

It belongs to the neuromodulin family. As to quaternary structure, identified in a complex containing FGFR4, NCAM1, CDH2, PLCG1, FRS2, SRC, SHC1, GAP43 and CTTN. Interacts (via IQ domain) with calmodulin. Binds calmodulin with a greater affinity in the absence of Ca(2+) than in its presence. In terms of processing, phosphorylated. Phosphorylation of this protein by a protein kinase C is specifically correlated with certain forms of synaptic plasticity. Palmitoylated by ZDHHC3. Palmitoylation is regulated by ARF6 and is essential for plasma membrane association and axonal and dendritic filopodia induction. Deacylated by LYPLA2.

It is found in the cell membrane. The protein resides in the cell projection. The protein localises to the growth cone membrane. It localises to the synapse. Its subcellular location is the filopodium membrane. It is found in the perikaryon. The protein resides in the dendrite. The protein localises to the axon. It localises to the cytoplasm. In terms of biological role, this protein is associated with nerve growth. It is a major component of the motile 'growth cones' that form the tips of elongating axons. Plays a role in axonal and dendritic filopodia induction. In Macaca fascicularis (Crab-eating macaque), this protein is Neuromodulin (GAP43).